Consider the following 244-residue polypeptide: MAQAVEEWYKQMPIITRSYLTAAVVTTVGCSLEIISPYNLYLNPTLVVKQYQFWRLVTNFLYFRKMDLDFLFHMFFLARYCKLLEENSFRGKTADFLYMLLFGATVLTGIVLIGGMIPYLSVSFSKIIFLSNSLTFMMVYVWSKQNPYIHMSFLGLFTFTAAYLPWVLLGFSILVGASAWGDFLGMIAGHAYYFLAFVYPRMTDRRPLKTPSFLKALFADEPVVIARPEDVRFAHAPFDEIHQD.

Residues 1-21 (MAQAVEEWYKQMPIITRSYLT) are Cytoplasmic-facing. The chain crosses the membrane as a helical span at residues 22–42 (AAVVTTVGCSLEIISPYNLYL). Topologically, residues 43–96 (NPTLVVKQYQFWRLVTNFLYFRKMDLDFLFHMFFLARYCKLLEENSFRGKTADF) are lumenal. Residues 97–117 (LYMLLFGATVLTGIVLIGGMI) traverse the membrane as a helical segment. Topologically, residues 118–121 (PYLS) are cytoplasmic. Residues 122–142 (VSFSKIIFLSNSLTFMMVYVW) form a helical membrane-spanning segment. Over 143–152 (SKQNPYIHMS) the chain is Lumenal. A helical transmembrane segment spans residues 153–173 (FLGLFTFTAAYLPWVLLGFSI). Over 174 to 244 (LVGASAWGDF…HAPFDEIHQD (71 aa)) the chain is Cytoplasmic.

It belongs to the derlin family.

Its subcellular location is the endoplasmic reticulum membrane. Functionally, may be involved in the degradation process of specific misfolded endoplasmic reticulum (ER) luminal proteins. The protein is Derlin-2.1 (DER2.1) of Arabidopsis thaliana (Mouse-ear cress).